Consider the following 160-residue polypeptide: Cytochrome b6-f complex subunit 4 (160 aa).

3 helical membrane-spanning segments follow: residues 36 to 56 (LLYI…GLAI), 95 to 115 (LLGV…PFLE), and 131 to 151 (TVFL…TLPI).

The protein belongs to the cytochrome b family. PetD subfamily. In terms of assembly, the 4 large subunits of the cytochrome b6-f complex are cytochrome b6, subunit IV (17 kDa polypeptide, petD), cytochrome f and the Rieske protein, while the 4 small subunits are petG, petL, petM and petN. The complex functions as a dimer.

The protein resides in the plastid. It localises to the chloroplast thylakoid membrane. Component of the cytochrome b6-f complex, which mediates electron transfer between photosystem II (PSII) and photosystem I (PSI), cyclic electron flow around PSI, and state transitions. The sequence is that of Cytochrome b6-f complex subunit 4 from Oenothera elata subsp. hookeri (Hooker's evening primrose).